The following is a 233-amino-acid chain: Small ribosomal subunit protein uS2 (233 aa).

It belongs to the universal ribosomal protein uS2 family.

The polypeptide is Small ribosomal subunit protein uS2 (Prochlorococcus marinus (strain MIT 9312)).